The sequence spans 408 residues: MEKIMPISPISGHMPLSQIQVPQHATTSPLLEQGNRLFEQSVRRGPLHFQSSSLKHLCAELRQLQNAPSSMQARRVQDAIQHWENHHPKEVMARSTRLAELKQALAEQGTVGRTLQSKVMATGPQVILKQPMPALPQSIAAQITKAQTGCTTTLVSSATAELIKHNQNNQQHIKDSDGRKPVNNMPPPPPPPMADKTQKVKKWVVNTDSKQLQALRYYSAQGYNLINTYLRGGEYVKHQAIETLLSRNYLHSNEPTPQEFDAGMRAYIQDVTEGLNELAITDHKKVYRGLKFDKSELKNLLDQYTTEGNIIAEKGFLSTSPDKAWVNDTILVINLESGHKGRILGDAAHFKGEAEMLFPPESKMLVEKVLNRDDKEFDSHFSNLRLTDDASADTTRIKRIINIKMLNE.

The tract at residues 168 to 196 (NNQQHIKDSDGRKPVNNMPPPPPPPMADK) is disordered. Over residues 184 to 193 (NMPPPPPPPM) the composition is skewed to pro residues. The TR mART core domain maps to 190-393 (PPPMADKTQK…LRLTDDASAD (204 aa)). Active-site residues include Arg-288, Ser-318, and Glu-355.

This sequence in the C-terminal section; belongs to the SpvB family.

It carries out the reaction L-arginyl-[protein] + NAD(+) = N(omega)-(ADP-D-ribosyl)-L-arginyl-[protein] + nicotinamide + H(+). Functionally, mono-ADP-ribosylates chicken skeletal alpha-actin and human non-skeletal beta- and gamma-actin. Mono-ADP-ribosylates 'Arg-177' of yeast actin, blocking its ability to polymerize. Does not possess NAD(+)-glycohydrolase activity, unlike most mART enzymes. Upon expression in S.cerevisiae almost completely inhibits growth. This chain is Photox toxin (phxA), found in Photorhabdus laumondii subsp. laumondii (strain DSM 15139 / CIP 105565 / TT01) (Photorhabdus luminescens subsp. laumondii).